The chain runs to 3753 residues: MVLESVVADLLNRFLGDYVENLNKSQLKLGIWGGNVALDNLQIKENALSELDVPFKVKAGQIDKLTLKIPWKNLYGEAVVATLEGLYLLVVPGASIKYDAVKEEKSLQDVKQKELSRIEEALQKAAEKGTHSGEFIYGLENFVYKDIKPGRKRKKHKKHFKKPFKGLDRSKDKPKEAKKDTFVEKLATQVIKNVQVKITDIHIKYEDDVTDPKRPLSFGVTLGELSLLTANEHWTPCILNEADKIIYKLIRLDSLSAYWNVNCSMSYQRSREQILDQLKNEILTSGNIPPNYQYIFQPISASAKLYMNPYAESELKTPKLDCNIEIQNIAIELTKPQYLSMIDLLESVDYMVRNAPYRKYKPYLPLHTNGRRWWKYAIDSVLEVHIRRYTQMWSWSNIKKHRQLLKSYKIAYKNKLTQSKVSEEIQKEIQDLEKTLDVFNIILARQQAQVEVIRSGQKLRKKSADTGEKRGGWFSGLWGKKESKKKDEESLIPETIDDLMTPEEKDKLFTAIGYSESTHNLTLPKQYVAHIMTLKLVSTSVTIRENKNIPEILKIQIIGLGTQVSQRPGAQALKVEAKLEHWYITGLRQQDIVPSLVASIGDTTSSLLKIKFETNPEDSPADQTLIVQSQPVEVIYDAKTVNAVVEFFQSNKGLDLEQITSATLMKLEEIKERTATGLTHIIETRKVLDLRINLKPSYLVVPQTGFHHEKSDLLILDFGTFQLNSKDQGLQKTTNSSLEEIMDKAYDKFDVEIKNVQLLFARAEETWKKCRFQHPSTMHILQPMDIHVELAKAMVEKDIRMARFKVSGGLPLMHVRISDQKMKDVLYLMNSIPLPQKSSAQSPERQVSSIPIISGGTKGLLGTSLLLDTVESESDDEYFDAEDGEPQTCKSMKGSELKKAAEVPNEELINLLLKFEIKEVILEFTKQQKEEDTILVFNVTQLGTEATMRTFDLTVVSYLKKISLDYHEIEGSKRKPLHLISSSDKPGLDLLKVEYIKADKNGPSFQTAFGKTEQTVKVAFSSLNLLLQTQALVASINYLTTIIPSDDQSISVAKEVQISTEKQQKNSTLPKAIVSSRDSDIIDFRLFAKLNAFCVIVCNEKNNIAEIKIQGLDSSLSLQSRKQSLFARLENIIVTDVDPKTVHKKAVSIMGNEVFRFNLDLYPDATEGDLYTDMSKVDGVLSLNVGCIQIVYLHKFLMSLLNFLNNFQTAKESLSAATAQAAERAATSVKDLAQRSFRVSINIDLKAPVIVIPQSSISTNAVVVDLGLIRVHNQFSLVSDEDYLNPPVIDRMDVQLTKLTLYRTVIQPGIYHPDIQLLHPINLEFLVNRNLAASWYHKVPVVEIKGHLDSMNVSLNQEDLNLLFRILTENLCEGTEDLDKVKPRVQETGEIKEPLEISISQDVHDSKNTLTTGVEEIRSVDIINMLLNFEIKEVVVTLMKKSEKKGRPLHELNVLQLGMEAKVKTYDMTAKAYLKKISMQCFDFTDSKGEPLHIINSSNVTDEPLLKMLLTKADSDGPEFKTIHDSTKQRLKVSFASLDLVLHLEALLSFMDFLSSAAPFSEPSSSEKESELKPLVGESRSIAVKAVSSNISQKDVFDLKITAELNAFNVFVCDQKCNIADIKIHGMDASISVKPKQTDVFARLKDIIVMNVDLQSIHKKAVSILGDEVFRFQLTLYPDATEGEAYADMSKVDGKLSFKVGCIQIVYVHKFFMSLLNFLNNFQTAKEALSTATVQAAERAASSMKDLAQKSFRLLMDINLKAPVIIIPQSSVSPNAVIADLGLIRVENKFSLVPMEHYSLPPVIDKMNIELTQLKLSRTILQASLPQNDIEILKPVNMLLSIQRNLAAAWYVQIPGMEIKGKLKPMQVALSEDDLTVLMKILLENLGEASSQPSPTQSVQETVRVRKVDVSSVPDHLKEQEDWTDSKLSMNQIVSLQFDFHFESLSIILYNNDINQESGVAFHNDSFQLGELRLHLMASSGKMFKDGSMNVSVKLKTCTLDDLREGIERATSRMIDRKNDQDNNSSMIDISYKQDKNGSQIDAVLDKLYVCASVEFLMTVADFFIKAVPQSPENVAKETQILPRQTATGKVKIEKDDSVRPNMTLKAMITDPEVVFVASLTKADAPALTASFQCNLSLSTSKLEQMMEASVRDLKVLACPFLREKRGKNITTVLQPCSLFMEKCTWASGKQNINIMVKEFIIKISPIILNTVLTIMAALSPKTKEDGSKDTSKEMENLWGIKSINDYNTWFLGVDTATEITESFKGIEHSLIEENCGVVVESIQVTLECGLGHRTVPLLLAESKFSGNIKNWTSLMAAVADVTLQVHYYNEIHAVWEPLIERVEGKRQWNLRLDVKKNPVQDKSLLPGDDFIPEPQMAIHISSGNTMNITISKSCLNVFNNLAKGFSEGTASTFDYSLKDRAPFTVKNAVGVPIKVKPNCNLRVMGFPEKSDIFDVDAGQNLELEYASMVPSSQGNLSILSRQESSFFTLTIVPHGYTEVANIPVARPGRRLYNVRNPNASHSDSVLVQIDATEGNKVITLRSPLQIKNHFSIAFIIYKFVKNVKLLERIGIARPEEEFHVPLDSYRCQLFIQPAGILEHQYKESTTYISWKEELHRSREVRCMLQCPSVEVSFLPLIVNTVALPDELSYICTHGEDWDVAYIIHLYPSLTLRNLLPYSLRYLLEGTAETHELAEGSTADVLHSRISGEIMELVLVKYQGKNWNGHFRIRDTLPEFFPVCFSSDSTEVTTVDLSVHVRRIGSRMVLSVFSPYWLINKTTRVLQYRSEDIHVKHPADFRDIILFSFKKKNIFTKNKVQLKISTSAWSSSFSLDTVGSYGCVKCPANNMEYLVGVSIKMSSFNLSRIVTLTPFCTIANKSSLELEVGEIASDGSMPTNKWNYIASSECLPFWPESLSGKLCVRVVGCEGSSKPFFYNRQDNGTLLSLEDLNGGILVDVNTAEHSTVITFSDYHEGSAPALIMNHTPWDILTYKQSGSPEEMVLLPRQARLFAWADPTGTRKLTWTYAANVGEHDLLKDGCGQFPYDANIQIHWVSFLDGRQRVLLFTDDVALVSKALQAEEMEQADYEITLSLHSLGLSLVNNESKQEVSYIGITSSGVVWEVKPKQKWKPFSQKQIILLEQSYQKHQISRDHGWIKLDNNFEVNFDKDPMEMRLPIRSPIKRDFLSGIQIEFKQSSHQRSLRARLYWLQVDNQLPGAMFPVVFHPVAPPKSIALDSEPKPFIDVSVITRFNEYSKVLQFKYFMVLIQEMALKIDQGFLGAIIALFTPTTDPEAERRRTKLIQQDIDALNAELMETSMTDMSILSFFEHFHISPVKLHLSLSLGSGGEESDKEKQEMFAVHSVNLLLKSIGATLTDVDDLIFKLAYYEIRYQFYKRDQLIWSVVRHYSEQFLKQMYVLVLGLDVLGNPFGLIRGLSEGVEALFYEPFQGAVQGPEEFAEGLVIGVRSLFGHTVGGAAGVVSRITGSVGKGLAAITMDKEYQQKRREELSRQPRDFGDSLARGGKGFLRGVVGGVTGIITKPVEGAKKEGAAGFFKGIGKGLVGAVARPTGGIVDMASSTFQGIQRAAESTEEVSSLRPPRLIHEDGIIRPYDRQESEGSDLLENHIKKLEGETYRYHCAIPGSKKTILMVTNRRVLCIKEVEILGLMCVDWQCPFEDFVFPPSVSENVLKISVKEQGLFHKKDSANQGCVRKVYLKDTATAERACNAIEDAQSTRQQQKLMKQSSVRLLRPQLPS.

A Chorein N-terminal domain is found at 3–116 (LESVVADLLN…LQDVKQKELS (114 aa)). A Phosphoserine modification is found at Ser-132. Basic residues predominate over residues 150–164 (GRKRKKHKKHFKKPF). The interval 150–176 (GRKRKKHKKHFKKPFKGLDRSKDKPKE) is disordered. Residues 165–176 (KGLDRSKDKPKE) show a composition bias toward basic and acidic residues. Position 614 is a phosphothreonine (Thr-614). A Phosphoserine modification is found at Ser-619. Thr-624 carries the post-translational modification Phosphothreonine. 4 positions are modified to phosphoserine: Ser-737, Ser-842, Ser-872, and Ser-874. The short motif at 877–883 (EYFDAED) is the FFAT element. Phosphoserine is present on residues Ser-1979 and Ser-2473. Residues 2415 to 3309 (DYSLKDRAPF…IQQDIDALNA (895 aa)) form a required for late endosome/lysosome localization region. In terms of domain architecture, SHR-BD spans 2766–3016 (LSVFSPYWLI…RLFAWADPTG (251 aa)). A required for lipid droplet localization region spans residues 3310–3753 (ELMETSMTDM…VRLLRPQLPS (444 aa)). 2 positions are modified to omega-N-methylarginine: Arg-3519 and Arg-3526. An N6-acetyllysine modification is found at Lys-3538. Ser-3641 is subject to Phosphoserine.

The protein belongs to the VPS13 family. Widely expressed.

Its subcellular location is the mitochondrion outer membrane. It localises to the lipid droplet. The protein resides in the endoplasmic reticulum membrane. The protein localises to the lysosome membrane. It is found in the late endosome membrane. Its function is as follows. Mediates the transfer of lipids between membranes at organelle contact sites. Necessary for proper mitochondrial function and maintenance of mitochondrial transmembrane potential. Involved in the regulation of PINK1/PRKN-mediated mitophagy in response to mitochondrial depolarization. This Homo sapiens (Human) protein is Intermembrane lipid transfer protein VPS13C.